The following is a 32-amino-acid chain: MSDIN-like toxin proprotein 2 (32 aa).

The propeptide occupies 1 to 10 (MSDINATRLP). Residues 11–17 (HLVRYPP) constitute a cross-link (cyclopeptide (His-Pro)). The propeptide occupies 18 to 32 (YVGDGTDLTLNRGEK).

It belongs to the MSDIN fungal toxin family. In terms of processing, processed by the macrocyclase-peptidase enzyme POPB to yield a toxic cyclic heptapeptide. POPB first removes 10 residues from the N-terminus. Conformational trapping of the remaining peptide forces the enzyme to release this intermediate rather than proceed to macrocyclization. The enzyme rebinds the remaining peptide in a different conformation and catalyzes macrocyclization of the N-terminal 7 residues.

In terms of biological role, probable toxin that belongs to the MSDIN-like toxin family responsible for a large number of food poisoning cases and deaths. This is MSDIN-like toxin proprotein 2 from Amanita fuligineoides.